The chain runs to 154 residues: Transcriptional repressor NrdR (154 aa).

A zinc finger spans residues C3–C34. One can recognise an ATP-cone domain in the interval P49–E139.

It belongs to the NrdR family. Requires Zn(2+) as cofactor.

Functionally, negatively regulates transcription of bacterial ribonucleotide reductase nrd genes and operons by binding to NrdR-boxes. The protein is Transcriptional repressor NrdR of Pseudomonas fluorescens (strain Pf0-1).